The sequence spans 1205 residues: Nitric oxide synthase 3 (1205 aa).

The tract at residues 1–73 (MGNLKSVGQE…PPDGPKFPRV (73 aa)) is disordered. The N-myristoyl glycine moiety is linked to residue Gly-2. 2 S-palmitoyl cysteine lipidation sites follow: Cys-15 and Cys-26. Positions 15–27 (CGLGLGLGLGLCG) are enriched in gly residues. Residues 44–54 (LAPPPSPPPAP) are compositionally biased toward pro residues. Residues Cys-96 and Cys-101 each coordinate Zn(2+). Residues 100 to 488 (RCLGSLVFPR…TDPWKGSASK (389 aa)) are interaction with NOSIP. Ser-104 contacts (6R)-L-erythro-5,6,7,8-tetrahydrobiopterin. The residue at position 116 (Ser-116) is a Phosphoserine; by CDK5. Residue Cys-186 participates in heme b binding. Gln-249, Trp-358, Tyr-359, Glu-363, and Asn-368 together coordinate L-arginine. Residues Ala-448, Trp-449, and Phe-462 each coordinate (6R)-L-erythro-5,6,7,8-tetrahydrobiopterin. Tyr-477 contacts heme b. The tract at residues 492 to 512 (VTRKKTFKEVANAVKISASLM) is calmodulin-binding. Position 497 is a phosphothreonine; by AMPK (Thr-497). Residues 522–705 (ATILYGSETG…AFGGWAQAAF (184 aa)) enclose the Flavodoxin-like domain. Ser-528, Glu-529, Thr-530, Arg-532, Ser-574, and Thr-575 together coordinate FMN. Phosphoserine is present on residues Ser-617, Ser-635, and Ser-640. Ser-656, Cys-663, Glu-689, and Gln-693 together coordinate FMN. An FAD-binding FR-type domain is found at 758–1004 (RKMVQATVLA…IRGAPSFRLP (247 aa)). Arg-778 contributes to the NADP(+) binding site. Residue His-800 coordinates FAD. Positions 819–850 (VEDPPPPGEPVAVEQLEKGSPGGPPPSWVRDP) are disordered. Ser-838 is modified (phosphoserine). Residues Arg-940, Tyr-942, Ser-943, Thr-958, Ala-960, Tyr-964, Val-977, Cys-978, and Ser-979 each contribute to the FAD site. Residues Thr-1018, Arg-1051, Ser-1080, Arg-1081, Lys-1087, Tyr-1089, and Gln-1091 each contribute to the NADP(+) site. At Thr-1177 the chain carries Phosphothreonine. Ser-1179 carries the post-translational modification Phosphoserine; by AMPK. Ser-1181 bears the Phosphoserine mark.

This sequence belongs to the NOS family. In terms of assembly, homodimer. Interacts with NOSIP and NOSTRIN. Interacts with HSP90AB1. Forms a complex with ASL, ASS1 and SLC7A1; the complex regulates cell-autonomous L-arginine synthesis and citrulline recycling while channeling extracellular L-arginine to nitric oxide synthesis pathway. The cofactor is heme b. FAD is required as a cofactor. FMN serves as cofactor. Requires (6R)-L-erythro-5,6,7,8-tetrahydrobiopterin as cofactor. Post-translationally, phosphorylation by AMPK at Ser-1179 in the presence of Ca(2+)-calmodulin (CaM) activates activity. In absence of Ca(2+)-calmodulin, AMPK also phosphorylates Thr-497, resulting in inhibition of activity. Phosphorylation of Ser-116 by CDK5 reduces activity.

The protein resides in the membrane. The protein localises to the caveola. Its subcellular location is the cytoplasm. It localises to the cytoskeleton. It is found in the golgi apparatus. The protein resides in the cell membrane. It catalyses the reaction 2 L-arginine + 3 NADPH + 4 O2 + H(+) = 2 L-citrulline + 2 nitric oxide + 3 NADP(+) + 4 H2O. With respect to regulation, stimulated by calcium/calmodulin. Inhibited by NOSIP and NOSTRIN. Produces nitric oxide (NO) which is implicated in vascular smooth muscle relaxation through a cGMP-mediated signal transduction pathway. NO mediates vascular endothelial growth factor (VEGF)-induced angiogenesis in coronary vessels and promotes blood clotting through the activation of platelets. The sequence is that of Nitric oxide synthase 3 (NOS3) from Canis lupus familiaris (Dog).